The following is a 445-amino-acid chain: Phenylacetate-coenzyme A ligase (445 aa).

The protein belongs to the phenylacetyl-CoA ligase family. In terms of assembly, monomer.

The enzyme catalyses 2-phenylacetate + ATP + CoA = phenylacetyl-CoA + AMP + diphosphate. The protein operates within aromatic compound metabolism; phenylacetate degradation. Its function is as follows. Catalyzes the activation of phenylacetic acid (PA) to phenylacetyl-CoA (PA-CoA). Involved in the phenylalanine metabolism. The sequence is that of Phenylacetate-coenzyme A ligase from Thermus thermophilus (strain ATCC BAA-163 / DSM 7039 / HB27).